Here is a 186-residue protein sequence, read N- to C-terminus: UPF0301 protein Swit_2673 (186 aa).

Belongs to the UPF0301 (AlgH) family.

The polypeptide is UPF0301 protein Swit_2673 (Rhizorhabdus wittichii (strain DSM 6014 / CCUG 31198 / JCM 15750 / NBRC 105917 / EY 4224 / RW1) (Sphingomonas wittichii)).